The following is a 516-amino-acid chain: Cytochrome P450 monooxygenase asR2 (516 aa).

A helical membrane pass occupies residues 9–29 (LNSITFSLLVFLGFVGVSQLI). Asn-248 and Asn-273 each carry an N-linked (GlcNAc...) asparagine glycan. Residue Cys-461 participates in heme binding.

The protein belongs to the cytochrome P450 family. It depends on heme as a cofactor.

The protein resides in the membrane. Its pathway is secondary metabolite biosynthesis; terpenoid biosynthesis. Cytochrome P450 monooxygenase; part of the gene cluster that mediates the biosynthesis of xenovulene A, an unusual meroterpenoid that has potent inhibitory effects on the human gamma-aminobutyrate A (GABAA) benzodiazepine receptor. The first step of xenovulene A biosynthesis is the biosynthesis of 3-methylorcinaldehyde performed by the non-reducing polyketide synthase aspks1. The salicylate hydroxylase asL1 then catalyzes the oxidative dearomatization of 3-methylorcinaldehyde to yield a dearomatized hydroxycyclohexadione. The 2-oxoglutarate-dependent dioxygenase asL3 further catalyzes the oxidative ring expansion to provide the first tropolone metabolite. The cytochrome P450 monooxygenase asR2 allows the synthesis of tropolone hemiacetal. In parallel, a previously unrecognised class of terpene cyclase, asR6, produces alpha-humulene from farnesylpyrophosphate (FPP). The putative Diels-Alderase asR5 probably catalyzes the formation of the tropolone-humulene skeleton by linking humulene and the polyketide moiety. Oxidative-ring contractions catalyzed by asL4 and asL6 then processively remove carbon atoms from the polyketide to yield xenovulene A. This Sarocladium schorii (Acremonium strictum (strain IMI 501407)) protein is Cytochrome P450 monooxygenase asR2.